The chain runs to 152 residues: Transcriptional regulator MraZ (152 aa).

2 consecutive SpoVT-AbrB domains span residues 5–52 (ASAI…PLQE) and 81–124 (AHEC…DEAA).

The protein belongs to the MraZ family. As to quaternary structure, forms oligomers.

The protein resides in the cytoplasm. It is found in the nucleoid. This is Transcriptional regulator MraZ from Shewanella denitrificans (strain OS217 / ATCC BAA-1090 / DSM 15013).